A 260-amino-acid polypeptide reads, in one-letter code: uncharacterized protein (260 aa).

This sequence belongs to the MG032/MG096/MG288 family.

This is an uncharacterized protein from Mycoplasma pneumoniae (strain ATCC 29342 / M129 / Subtype 1) (Mycoplasmoides pneumoniae).